The following is a 118-amino-acid chain: V-type proton ATPase subunit G 2 (118 aa).

The segment at 26-90 (RKRKARRLKQ…VQGMQSSQQR (65 aa)) is disordered. The segment covering 35 to 55 (QAKEEAQMEVEQYRREREQEF) has biased composition (basic and acidic residues). Composition is skewed to polar residues over residues 56–69 (QSKQQAAMGSQGNL) and 78–89 (RRQVQGMQSSQQ).

This sequence belongs to the V-ATPase G subunit family. As to quaternary structure, V-ATPase is a heteromultimeric enzyme made up of two complexes: the ATP-hydrolytic V1 complex and the proton translocation V0 complex. The V1 complex consists of three catalytic AB heterodimers that form a heterohexamer, three peripheral stalks each consisting of EG heterodimers, one central rotor including subunits D and F, and the regulatory subunits C and H. The proton translocation complex V0 consists of the proton transport subunit a, a ring of proteolipid subunits c9c'', rotary subunit d, subunits e and f, and the accessory subunits ATP6AP1/Ac45 and ATP6AP2/PRR.

It localises to the melanosome. The protein localises to the cytoplasmic vesicle. Its subcellular location is the clathrin-coated vesicle membrane. Functionally, subunit of the V1 complex of vacuolar(H+)-ATPase (V-ATPase), a multisubunit enzyme composed of a peripheral complex (V1) that hydrolyzes ATP and a membrane integral complex (V0) that translocates protons. V-ATPase is responsible for acidifying and maintaining the pH of intracellular compartments and in some cell types, is targeted to the plasma membrane, where it is responsible for acidifying the extracellular environment. This is V-type proton ATPase subunit G 2 (ATP6V1G2) from Sus scrofa (Pig).